Here is a 476-residue protein sequence, read N- to C-terminus: H2.0-like homeobox protein (476 aa).

Disordered regions lie at residues 120–169 (QHLP…PSSK), 328–401 (WRHS…HQTT), and 413–476 (TASS…LAGL). Low complexity-rich tracts occupy residues 123-134 (PQQSPTQQQQPQ) and 158-168 (HHSGSAPAPSS). Positions 273 to 332 (RSWSRAVFSNLQRKGLEKRFEIQKYVTKPDRKQLAAMLGLTDAQVKVWFQNRRMKWRHSK) form a DNA-binding region, homeobox. Composition is skewed to basic and acidic residues over residues 331–346 (SKEA…EAGE) and 355–368 (EGER…RSEG). A compositionally biased stretch (acidic residues) spans 369 to 379 (EAESESSDSES). Over residues 386-397 (DTERTEGTERSL) the composition is skewed to basic and acidic residues. Residues 413-434 (TASSSTSGSSFSFSSTSSLGSG) show a composition bias toward low complexity. Composition is skewed to polar residues over residues 435-446 (NTHVGSASSLGG) and 455-467 (HQPS…QSPE).

The protein belongs to the H2.0 homeobox family. Expressed in Th1 cells, CD8-positive T-cells, B-cells and NK cells.

It is found in the nucleus. Functionally, transcription factor required for TBX21/T-bet-dependent maturation of Th1 cells as well as maintenance of Th1-specific gene expression. Involved in embryogenesis and hematopoiesis. The protein is H2.0-like homeobox protein (Hlx) of Mus musculus (Mouse).